Here is a 334-residue protein sequence, read N- to C-terminus: Malate dehydrogenase, cytoplasmic (334 aa).

N-acetylserine is present on S2. Residues 11–17 (GAAGQIA) and D42 each bind NAD(+). 2 residues coordinate substrate: R92 and R98. N105 contacts NAD(+). K110 carries the N6-succinyllysine modification. Residue Q112 coordinates NAD(+). N6-acetyllysine occurs at positions 118 and 121. Residue 129 to 131 (VGN) participates in NAD(+) binding. Substrate-binding residues include N131 and R162. Residue H187 is the Proton acceptor of the active site. K214 is subject to N6-succinyllysine. At S217 the chain carries Phosphoserine. R230 is modified (omega-N-methylarginine). S241 carries the post-translational modification Phosphoserine. Residue K298 is modified to N6-acetyllysine; alternate. The residue at position 298 (K298) is an N6-succinyllysine; alternate. The residue at position 309 (S309) is a Phosphoserine. K318 is modified (N6-succinyllysine). Residues S332 and S333 each carry the phosphoserine modification.

Belongs to the LDH/MDH superfamily. MDH type 2 family. Homodimer. ISGylated. Post-translationally, acetylation at Lys-118 dramatically enhances enzymatic activity and promotes adipogenic differentiation.

It is found in the cytoplasm. The protein resides in the cytosol. The catalysed reaction is (S)-malate + NAD(+) = oxaloacetate + NADH + H(+). It carries out the reaction (2R)-2-hydroxy-3-(4-hydroxyphenyl)propanoate + NAD(+) = 3-(4-hydroxyphenyl)pyruvate + NADH + H(+). The enzyme catalyses (S)-2-hydroxyglutarate + NAD(+) = 2-oxoglutarate + NADH + H(+). In terms of biological role, catalyzes the reduction of aromatic alpha-keto acids in the presence of NADH. Plays essential roles in the malate-aspartate shuttle and the tricarboxylic acid cycle, important in mitochondrial NADH supply for oxidative phosphorylation. Catalyzes the reduction of 2-oxoglutarate to 2-hydroxyglutarate, leading to elevated reactive oxygen species (ROS). This is Malate dehydrogenase, cytoplasmic (Mdh1) from Rattus norvegicus (Rat).